Here is a 336-residue protein sequence, read N- to C-terminus: Nicotinate-nucleotide--dimethylbenzimidazole phosphoribosyltransferase (336 aa).

Catalysis depends on Glu304, which acts as the Proton acceptor.

This sequence belongs to the CobT family.

It catalyses the reaction 5,6-dimethylbenzimidazole + nicotinate beta-D-ribonucleotide = alpha-ribazole 5'-phosphate + nicotinate + H(+). The protein operates within nucleoside biosynthesis; alpha-ribazole biosynthesis; alpha-ribazole from 5,6-dimethylbenzimidazole: step 1/2. In terms of biological role, catalyzes the synthesis of alpha-ribazole-5'-phosphate from nicotinate mononucleotide (NAMN) and 5,6-dimethylbenzimidazole (DMB). The sequence is that of Nicotinate-nucleotide--dimethylbenzimidazole phosphoribosyltransferase from Mesorhizobium japonicum (strain LMG 29417 / CECT 9101 / MAFF 303099) (Mesorhizobium loti (strain MAFF 303099)).